We begin with the raw amino-acid sequence, 399 residues long: Putative endoplasmin-like protein (399 aa).

A Glycyl lysine isopeptide (Lys-Gly) (interchain with G-Cter in SUMO2) cross-link involves residue K130. A disordered region spans residues 350–399; that stretch reads LDLAVVEEPDEEPEETAEDKEQDKDKEMDVGTDEEKQETAKESTAEKDEL. Positions 354–367 are enriched in acidic residues; it reads VVEEPDEEPEETAE. Residues 368-399 show a composition bias toward basic and acidic residues; the sequence is DKEQDKDKEMDVGTDEEKQETAKESTAEKDEL.

The protein belongs to the heat shock protein 90 family.

In terms of biological role, putative molecular chaperone. This chain is Putative endoplasmin-like protein (HSP90B2P), found in Homo sapiens (Human).